We begin with the raw amino-acid sequence, 177 residues long: Large ribosomal subunit protein uL6 (177 aa).

The protein belongs to the universal ribosomal protein uL6 family. As to quaternary structure, part of the 50S ribosomal subunit.

Functionally, this protein binds to the 23S rRNA, and is important in its secondary structure. It is located near the subunit interface in the base of the L7/L12 stalk, and near the tRNA binding site of the peptidyltransferase center. The sequence is that of Large ribosomal subunit protein uL6 from Salmonella newport (strain SL254).